The following is a 76-amino-acid chain: MGAALSQGALIAIICNGLVGFLLLLLWVILCWACHSRSANIDSLSESSPNSSPGPCPEKAPPPQKPSHEGSYLLQP.

The signal sequence occupies residues 1–33 (MGAALSQGALIAIICNGLVGFLLLLLWVILCWA). The tract at residues 41-76 (IDSLSESSPNSSPGPCPEKAPPPQKPSHEGSYLLQP) is disordered. The segment covering 52–65 (SPGPCPEKAPPPQK) has biased composition (pro residues).

The protein localises to the secreted. In terms of biological role, involved in the regulation of glucose homeostasis and lipid metabolism. In Bos taurus (Bovine), this protein is Adropin (ENHO).